The primary structure comprises 70 residues: DNA-directed RNA polymerase subunit omega (70 aa).

The protein belongs to the RNA polymerase subunit omega family. In terms of assembly, the RNAP catalytic core consists of 2 alpha, 1 beta, 1 beta' and 1 omega subunit. When a sigma factor is associated with the core the holoenzyme is formed, which can initiate transcription.

The enzyme catalyses RNA(n) + a ribonucleoside 5'-triphosphate = RNA(n+1) + diphosphate. Its function is as follows. Promotes RNA polymerase assembly. Latches the N- and C-terminal regions of the beta' subunit thereby facilitating its interaction with the beta and alpha subunits. The protein is DNA-directed RNA polymerase subunit omega of Staphylococcus haemolyticus (strain JCSC1435).